The following is a 189-amino-acid chain: Large ribosomal subunit protein eL20 (189 aa).

Belongs to the eukaryotic ribosomal protein eL20 family.

It is found in the cytoplasm. This Tetrahymena thermophila protein is Large ribosomal subunit protein eL20 (RPL18A).